We begin with the raw amino-acid sequence, 47 residues long: Delta-halcutoxin-Hcg1a (47 aa).

3 cysteine pairs are disulfide-bonded: cysteine 3/cysteine 43, cysteine 5/cysteine 33, and cysteine 26/cysteine 44.

It belongs to the sea anemone sodium channel inhibitory toxin family. Type II subfamily.

The protein localises to the secreted. It localises to the nematocyst. In terms of biological role, is potently lethal to crabs, although it showed neither lethal activity in mice nor hemolytic activity. May bind to voltage-gated sodium channels (Nav), thereby delaying their inactivation during signal transduction. The sequence is that of Delta-halcutoxin-Hcg1a from Isohalcurias carlgreni (Sea anemone).